Reading from the N-terminus, the 394-residue chain is MSWSFLTRLLEEIHNHSTFVGKIWLSVLIVFRIVLTAVGGESIYYDEQSKFVCNTEQPGCENVCYDAFAPLSHVRFWVFQIILVATPSVMYLGYAIHKIARMVEHSDVDRRFRSKSFSTRWKQHRGLEEAEDDHEEDPMMYPEIELESERENKEQQPPAKAKHDGRRRIREDGLMRIYVLQLLVRATFEVGFLIGQYLLYGFEVSPVFVCSRKPCPHKIDCFISRPTEKTIFLLIMYGVSCMCLLLNVWEMLHLGFGTIRDTLNNKRKELEDSGTYNYPFTWNTPSAPPGYNIAVKPDQMQYTELSNAKMAYKQNKANIAQEQQYGSNEENIPADLENLQREIKVAQERLDMAIQAYNNQNNPGSSSREKKSKAGSNKSSASSKSGDGKNSVWI.

Residues 1–22 lie on the Cytoplasmic side of the membrane; sequence MSWSFLTRLLEEIHNHSTFVGK. Residues 23–45 form a helical membrane-spanning segment; it reads IWLSVLIVFRIVLTAVGGESIYY. Over 46–75 the chain is Extracellular; that stretch reads DEQSKFVCNTEQPGCENVCYDAFAPLSHVR. Residues 76–95 form a helical membrane-spanning segment; the sequence is FWVFQIILVATPSVMYLGYA. Over 96–176 the chain is Cytoplasmic; the sequence is IHKIARMVEH…RRIREDGLMR (81 aa). A helical transmembrane segment spans residues 177–199; that stretch reads IYVLQLLVRATFEVGFLIGQYLL. Over 200 to 229 the chain is Extracellular; the sequence is YGFEVSPVFVCSRKPCPHKIDCFISRPTEK. A helical membrane pass occupies residues 230–252; it reads TIFLLIMYGVSCMCLLLNVWEML. The Cytoplasmic segment spans residues 253-394; the sequence is HLGFGTIRDT…SGDGKNSVWI (142 aa). The tract at residues 354-394 is disordered; it reads IQAYNNQNNPGSSSREKKSKAGSNKSSASSKSGDGKNSVWI. The segment covering 356 to 366 has biased composition (polar residues); that stretch reads AYNNQNNPGSS. Over residues 374–394 the composition is skewed to low complexity; sequence AGSNKSSASSKSGDGKNSVWI.

Belongs to the connexin family. Gamma-type subfamily. A connexon is composed of a hexamer of connexins. In terms of tissue distribution, mostly in heart and stomach.

Its subcellular location is the cell membrane. The protein localises to the cell junction. It is found in the gap junction. In terms of biological role, one gap junction consists of a cluster of closely packed pairs of transmembrane channels, the connexons, through which materials of low MW diffuse from one cell to a neighboring cell. In Gallus gallus (Chicken), this protein is Gap junction gamma-1 protein (GJC1).